A 461-amino-acid chain; its full sequence is RNA-binding protein ZCH321 (461 aa).

2 C3H1-type zinc fingers span residues 63 to 85 (LCQL…HAAL) and 181 to 208 (ACDF…HICK). A disordered region spans residues 224–243 (TSQARDGGEPGPRGAKKGSV). The MKT1-binding motif signature appears at 446–451 (WQHNPY).

In terms of biological role, RNA-binding protein involved in regulation of mRNA stability. Promotes mRNA stabilization by recruiting MKT1 and PBP1. Stabilizes transcripts encoding mitochondrial proteins. This is RNA-binding protein ZCH321 from Trypanosoma brucei brucei (strain 927/4 GUTat10.1).